A 326-amino-acid chain; its full sequence is Phosphotriesterase homology protein (326 aa).

Residues His-22, His-24, Lys-145, His-178, His-207, and Asp-264 each contribute to the Zn(2+) site. Position 145 is an N6-carboxylysine (Lys-145).

The protein belongs to the metallo-dependent hydrolases superfamily. Phosphotriesterase family. Zn(2+) serves as cofactor.

The sequence is that of Phosphotriesterase homology protein (php) from Mycobacterium tuberculosis (strain CDC 1551 / Oshkosh).